A 193-amino-acid chain; its full sequence is MTFQPTKTWLVFDDNALINKPTEAVNFPIDEQIETCIKKMIAYVDASYDGKAQEYDIIPGIGIAANQIGYWKQLFYIHLNDLNKEKKCLLINPKIIDQSENKAFLESGEGCLSVKKQHKGYVIRSEWITIKGYDWFEKKEITIKATGLFGMCLQHEFDHLQGRFFYQRINPLNPWFKKPEWKVINPTLKTSNG.

The Fe cation site is built by cysteine 111 and histidine 155. Glutamate 156 is a catalytic residue. Histidine 159 provides a ligand contact to Fe cation.

Belongs to the polypeptide deformylase family. Fe(2+) is required as a cofactor.

It carries out the reaction N-terminal N-formyl-L-methionyl-[peptide] + H2O = N-terminal L-methionyl-[peptide] + formate. Its function is as follows. Removes the formyl group from the N-terminal Met of newly synthesized proteins. Requires at least a dipeptide for an efficient rate of reaction. N-terminal L-methionine is a prerequisite for activity but the enzyme has broad specificity at other positions. The sequence is that of Peptide deformylase from Mycoplasma genitalium (strain ATCC 33530 / DSM 19775 / NCTC 10195 / G37) (Mycoplasmoides genitalium).